A 467-amino-acid chain; its full sequence is MSSIRLYNTLTRKKETFEPLEPNKVKMYVCGPTVYNYIHIGNARAAIVFDTIRRYLEFRGYDVTYVSNFTDVDDKLIRAARELGESVPAIAERFIEAYFEDIEALGCKKADIHPRVTENIETIIEFIQALIDKGYAYEVDGDVYYRTRKFDGYGKLSHQSIDELQAGARIEVGEKKDDPLDFALWKAAKEGEISWDSPWGKGRPGWHIECSAMARKYLGDTIDIHAGGQDLTFPHHENEIAQSEALTGKPFAKYWLHNGYLNINNEKMSKSLGNFVLVHDIIRQIDPQVLRFFMLSVHYRHPINYSEELLESARRGLERLRTAYGNLQHRLGASTNLTDNDGEWLSRLADIRASFIREMDDDFNTANGIAVLFELAKQANLYLQEKTTSENVIHAFLREFEQLMDVLGLTLKQEELLDEEIEALIRQRNEARKNRDFALADRIRDELKAKNIILEDTPQGTRWKRGS.

C30 serves as a coordination point for Zn(2+). A 'HIGH' region motif is present at residues P32 to N42. Zn(2+) contacts are provided by C210, H235, and E239. The 'KMSKS' region motif lies at K267–S271. K270 contacts ATP. S271 is subject to Phosphoserine.

This sequence belongs to the class-I aminoacyl-tRNA synthetase family. As to quaternary structure, monomer. Zn(2+) is required as a cofactor.

It is found in the cytoplasm. The enzyme catalyses tRNA(Cys) + L-cysteine + ATP = L-cysteinyl-tRNA(Cys) + AMP + diphosphate. The chain is Cysteine--tRNA ligase from Geobacillus thermodenitrificans (strain NG80-2).